A 484-amino-acid chain; its full sequence is Nuclear rim protein 1 (484 aa).

The residue at position 3 (serine 3) is a Phosphoserine. The next 2 helical transmembrane spans lie at 145–165 and 237–257; these read FTIF…MFGY and IPTN…IVFL. A disordered region spans residues 416–457; sequence SSNENLEKGGAFLPNQDQNRPSKSLSPLRKTPLSARQKRFEG. Serine 417 carries the phosphoserine modification. Polar residues predominate over residues 430–440; that stretch reads NQDQNRPSKSL. Phosphoserine is present on serine 474.

This sequence belongs to the NUR1 family. Interacts with CSM1.

It localises to the nucleus membrane. Functionally, member of a perinuclear network that controls recombination at multiple loci to maintain genome stability. Required for rDNA repeat stability. This chain is Nuclear rim protein 1 (NUR1), found in Saccharomyces cerevisiae (strain JAY291) (Baker's yeast).